Here is a 274-residue protein sequence, read N- to C-terminus: Penicillin-insensitive murein endopeptidase (274 aa).

Positions 1–19 (MKNTVIALLALLASAGSLA) are cleaved as a signal peptide. Disulfide bonds link C44–C265, C187–C235, and C216–C223. Zn(2+)-binding residues include H110, H113, D120, D147, H150, and H211. Residues 224 to 263 (EDQAPPPPGDGCGAELQSWFEPPKPGSTPPVKKTPPPLPP) are disordered. Over residues 245–263 (PPKPGSTPPVKKTPPPLPP) the composition is skewed to pro residues.

Belongs to the peptidase M74 family. Dimer. It depends on Zn(2+) as a cofactor.

It is found in the periplasm. Its function is as follows. Murein endopeptidase that cleaves the D-alanyl-meso-2,6-diamino-pimelyl amide bond that connects peptidoglycan strands. Likely plays a role in the removal of murein from the sacculus. In Klebsiella pneumoniae subsp. pneumoniae (strain ATCC 700721 / MGH 78578), this protein is Penicillin-insensitive murein endopeptidase.